The chain runs to 590 residues: uncharacterized protein (590 aa).

Residues 1–68 (MKFSKPKFSM…SQRVWGPWNY (68 aa)) lie on the Cytoplasmic side of the membrane. The chain crosses the membrane as a helical span at residues 69–89 (VAFWLADSVNVNTWMIAGTAV). Topologically, residues 90–94 (ESGLS) are extracellular. Residues 95 to 115 (WWEAWITVWVGYTIAAFILTI) form a helical membrane-spanning segment. Topologically, residues 116 to 124 (AGRAGAVYH) are cytoplasmic. Residues 125–145 (ISFPVLSRSSFGIWGSLWPIL) form a helical membrane-spanning segment. Residues 146–149 (NRAV) lie on the Extracellular side of the membrane. A helical membrane pass occupies residues 150 to 170 (MACVWYGVQAWIGGECVTLMI). The Cytoplasmic segment spans residues 171–194 (RSIWPSFSHIPNTMAKSGTETYQW). Residues 195 to 215 (VGFFIFWLISNVAIWFPVYQI) traverse the membrane as a helical segment. Residues 216-218 (RHL) lie on the Extracellular side of the membrane. Residues 219-239 (FTAKSFLAPPAAIAFLIWALV) traverse the membrane as a helical segment. The Cytoplasmic segment spans residues 240 to 258 (KAHGAGDAIHAKTQLSTWN). Residues 259 to 279 (HGWAVTAGIISCLDNFATLIV) form a helical membrane-spanning segment. Residues 280–298 (NNPDFTRFATTPNAPIFPQ) are Extracellular-facing. The chain crosses the membrane as a helical span at residues 299–319 (LITIPMGFGITTLIGVLVGSA). The Cytoplasmic portion of the chain corresponds to 320–390 (SKSIYGENIW…LCPMFINIRR (71 aa)). The helical transmembrane segment at 391–411 (GGYIASIIGICMCPWNLLSSS) threads the bilayer. At 412 to 418 (NSFANSL) the chain is on the extracellular side. A helical membrane pass occupies residues 419–439 (SAYAVFLSSFAGILIADYFVI). Residues 440 to 467 (RKGYLKVDALYTINPNEPYWFTYGINLR) lie on the Cytoplasmic side of the membrane. A helical transmembrane segment spans residues 468–488 (AFASYICGLLINVVGLAGAVG). At 489-500 (DKVPKAALTMNN) the chain is on the extracellular side. The chain crosses the membrane as a helical span at residues 501-521 (IAYLLGIVTSFLSHLIICKIF). The Cytoplasmic segment spans residues 522–590 (PVTACGEKFL…GIDIKESSVF (69 aa)). A disordered region spans residues 566-590 (VSYDSKEKSDDGKSGGIDIKESSVF).

This sequence belongs to the purine-cytosine permease (2.A.39) family.

The protein resides in the cytoplasm. Its subcellular location is the nucleus. It is found in the membrane. This is an uncharacterized protein from Schizosaccharomyces pombe (strain 972 / ATCC 24843) (Fission yeast).